The chain runs to 550 residues: Leucine-rich repeat, immunoglobulin-like domain and transmembrane domain-containing protein 2 (550 aa).

The signal sequence occupies residues 1–19 (MASVFHYFLLVLVFLDTHA). One can recognise an LRRNT domain in the interval 23–54 (FCLPGCTCSEESFGRTLQCTSVSLGKIPGNLS). Asn-52 carries an N-linked (GlcNAc...) asparagine glycan. LRR repeat units follow at residues 80–103 (TLEYLWLNFNNISVIHLGALEHLP), 104–125 (ELRELRLEGNKLCSVPWTAFRA), 128–149 (LLRVLDLKRNKIDALPELALQF), and 152–173 (SLTYLDLSSNRLTVVSKSVFLN). One can recognise an LRRCT domain in the interval 200 to 252 (NPWVCDCRLRGLVQFVKSITLPVILVNSYLICQGPLSKAGQLFHETELSACMK). The Ig-like domain occupies 253–341 (PQISTPSANI…SIGKSNLVIS (89 aa)). A disulfide bridge connects residues Cys-274 and Cys-327. Residues 361–451 (EGNAYIDLRV…QGQCVAFVTG (91 aa)) enclose the Fibronectin type-III domain. A helical transmembrane segment spans residues 466–486 (VTVVLCVVLLAVPVGAYAWAA). Residues 508–550 (SCTPAAPQSKDGSFREHPAVCDDGEGHIDTEGDKEKGGTEDNS) form a disordered region. Residues 519-550 (GSFREHPAVCDDGEGHIDTEGDKEKGGTEDNS) show a composition bias toward basic and acidic residues.

In terms of assembly, interacts with LRIT1; may form a heterodimer with LRIT1.

The protein resides in the membrane. This chain is Leucine-rich repeat, immunoglobulin-like domain and transmembrane domain-containing protein 2 (LRIT2), found in Homo sapiens (Human).